The following is a 429-amino-acid chain: Histidine--tRNA ligase (429 aa).

This sequence belongs to the class-II aminoacyl-tRNA synthetase family. In terms of assembly, homodimer.

The protein resides in the cytoplasm. It carries out the reaction tRNA(His) + L-histidine + ATP = L-histidyl-tRNA(His) + AMP + diphosphate + H(+). This chain is Histidine--tRNA ligase, found in Streptococcus pneumoniae (strain JJA).